The chain runs to 285 residues: Chromatin modification-related protein YNG2 (285 aa).

Residues 19-54 (LEVKHLLQELKNKDVQLQEARKRYQTKDNQIHKFIR) adopt a coiled-coil conformation. Polar residues predominate over residues 138–165 (NGLSDNLSGTTTPRGHSASTPVADNAAN). Positions 138 to 218 (NGLSDNLSGT…SRPNEGPGNN (81 aa)) are disordered. Residues 193–207 (MKSEDFEDKKYDNDS) show a composition bias toward basic and acidic residues. The PHD-type zinc finger occupies 225 to 276 (NLYCFCQRVSFGEMIGCDNDDCKFEWFHWSCVGITAPPKDDEIWYCPDCAPK). 8 residues coordinate Zn(2+): cysteine 228, cysteine 230, cysteine 241, cysteine 246, histidine 252, cysteine 255, cysteine 270, and cysteine 273.

It belongs to the ING family. As to quaternary structure, interacts with H3K4me3 and to a lesser extent with H3K4me2. Component of the NuA4 histone acetyltransferase complex.

It localises to the nucleus. Component of the NuA4 histone acetyltransferase complex which is involved in transcriptional activation of selected genes principally by acetylation of nucleosomal histone H4 and H2A. The NuA4 complex is also involved in DNA repair. Involved in cell cycle progression and meiosis. This Debaryomyces hansenii (strain ATCC 36239 / CBS 767 / BCRC 21394 / JCM 1990 / NBRC 0083 / IGC 2968) (Yeast) protein is Chromatin modification-related protein YNG2 (YNG2).